The sequence spans 533 residues: T-complex protein 1 subunit delta (533 aa).

The span at 1–15 (MAQSQVGKGSPSNAT) shows a compositional bias: polar residues. The segment at 1-25 (MAQSQVGKGSPSNATFRDKEKPQEV) is disordered. The span at 16–25 (FRDKEKPQEV) shows a compositional bias: basic and acidic residues.

This sequence belongs to the TCP-1 chaperonin family. As to quaternary structure, heterooligomeric complex of about 850 to 900 kDa that forms two stacked rings, 12 to 16 nm in diameter.

It localises to the cytoplasm. In terms of biological role, molecular chaperone; assists the folding of proteins upon ATP hydrolysis. Known to play a role, in vitro, in the folding of actin and tubulin. The sequence is that of T-complex protein 1 subunit delta (CCT4) from Debaryomyces hansenii (strain ATCC 36239 / CBS 767 / BCRC 21394 / JCM 1990 / NBRC 0083 / IGC 2968) (Yeast).